Consider the following 237-residue polypeptide: Phosphoglycolate phosphatase (237 aa).

Catalysis depends on Asp-15, which acts as the Nucleophile. Asp-15, Asp-17, and Asp-177 together coordinate Mg(2+).

The protein belongs to the HAD-like hydrolase superfamily. CbbY/CbbZ/Gph/YieH family. The cofactor is Mg(2+).

The enzyme catalyses 2-phosphoglycolate + H2O = glycolate + phosphate. Its pathway is organic acid metabolism; glycolate biosynthesis; glycolate from 2-phosphoglycolate: step 1/1. Specifically catalyzes the dephosphorylation of 2-phosphoglycolate. Is involved in the dissimilation of the intracellular 2-phosphoglycolate formed during the DNA repair of 3'-phosphoglycolate ends, a major class of DNA lesions induced by oxidative stress. In Caulobacter vibrioides (strain ATCC 19089 / CIP 103742 / CB 15) (Caulobacter crescentus), this protein is Phosphoglycolate phosphatase.